We begin with the raw amino-acid sequence, 437 residues long: Serine--tRNA ligase (437 aa).

240-242 lines the L-serine pocket; the sequence is TAE. 271–273 provides a ligand contact to ATP; it reads RAE. E294 is a binding site for L-serine. 358–361 serves as a coordination point for ATP; it reads EISS. S394 lines the L-serine pocket.

Belongs to the class-II aminoacyl-tRNA synthetase family. Type-1 seryl-tRNA synthetase subfamily. In terms of assembly, homodimer. The tRNA molecule binds across the dimer.

Its subcellular location is the cytoplasm. The enzyme catalyses tRNA(Ser) + L-serine + ATP = L-seryl-tRNA(Ser) + AMP + diphosphate + H(+). It catalyses the reaction tRNA(Sec) + L-serine + ATP = L-seryl-tRNA(Sec) + AMP + diphosphate + H(+). The protein operates within aminoacyl-tRNA biosynthesis; selenocysteinyl-tRNA(Sec) biosynthesis; L-seryl-tRNA(Sec) from L-serine and tRNA(Sec): step 1/1. Catalyzes the attachment of serine to tRNA(Ser). Is also able to aminoacylate tRNA(Sec) with serine, to form the misacylated tRNA L-seryl-tRNA(Sec), which will be further converted into selenocysteinyl-tRNA(Sec). The protein is Serine--tRNA ligase of Methylobacterium nodulans (strain LMG 21967 / CNCM I-2342 / ORS 2060).